The sequence spans 1715 residues: Pentafunctional AROM polypeptide (1715 aa).

Over residues 1 to 17 (MTSTASAQQPVLRTKTP) the composition is skewed to polar residues. The interval 1 to 26 (MTSTASAQQPVLRTKTPSYHAPPSTD) is disordered. The segment at 1-421 (MTSTASAQQP…VQNMASTVSD (421 aa)) is 3-dehydroquinate synthase. Residues 71-73 (DQN), 112-115 (EASK), 143-145 (GGV), and D148 contribute to the NAD(+) site. R159 is a binding site for 7-phospho-2-dehydro-3-deoxy-D-arabino-heptonate. An NAD(+)-binding site is contributed by 168–169 (TT). 2 residues coordinate 7-phospho-2-dehydro-3-deoxy-D-arabino-heptonate: D175 and K181. K190 lines the NAD(+) pocket. N191 provides a ligand contact to 7-phospho-2-dehydro-3-deoxy-D-arabino-heptonate. NAD(+) is bound by residues 208–211 (WLKT) and N219. E223 is a binding site for Zn(2+). Residues 223 to 226 (EVVK) and K287 each bind 7-phospho-2-dehydro-3-deoxy-D-arabino-heptonate. The active-site Proton acceptor; for 3-dehydroquinate synthase activity is the E297. Residues 301–305 (RNLVN) and H308 each bind 7-phospho-2-dehydro-3-deoxy-D-arabino-heptonate. H308 serves as a coordination point for Zn(2+). The active-site Proton acceptor; for 3-dehydroquinate synthase activity is H312. 2 residues coordinate 7-phospho-2-dehydro-3-deoxy-D-arabino-heptonate: H324 and K393. H324 serves as a coordination point for Zn(2+). An EPSP synthase region spans residues 434 to 895 (VTPIHEQPNK…WDDLERKLGI (462 aa)). The active-site For EPSP synthase activity is the C877. The interval 948–1165 (HATIICIGMR…KGGRRTYFLS (218 aa)) is shikimate kinase. Position 955–962 (955–962 (GMRASGKT)) interacts with ATP. Positions 1166-1389 (LTFPDVVPKL…AAPGQLSFRQ (224 aa)) are 3-dehydroquinase. H1292 serves as the catalytic Proton acceptor; for 3-dehydroquinate dehydratase activity. The active-site Schiff-base intermediate with substrate; for 3-dehydroquinate dehydratase activity is the K1320. The segment at 1402 to 1715 (ARRFALFGSP…AAWDVYLQRC (314 aa)) is shikimate dehydrogenase.

It in the N-terminal section; belongs to the sugar phosphate cyclases superfamily. Dehydroquinate synthase family. This sequence in the 2nd section; belongs to the EPSP synthase family. The protein in the 3rd section; belongs to the shikimate kinase family. In the 4th section; belongs to the type-I 3-dehydroquinase family. It in the C-terminal section; belongs to the shikimate dehydrogenase family. As to quaternary structure, homodimer. Zn(2+) serves as cofactor.

The protein localises to the cytoplasm. The enzyme catalyses 7-phospho-2-dehydro-3-deoxy-D-arabino-heptonate = 3-dehydroquinate + phosphate. The catalysed reaction is 3-dehydroquinate = 3-dehydroshikimate + H2O. It carries out the reaction shikimate + NADP(+) = 3-dehydroshikimate + NADPH + H(+). It catalyses the reaction shikimate + ATP = 3-phosphoshikimate + ADP + H(+). The enzyme catalyses 3-phosphoshikimate + phosphoenolpyruvate = 5-O-(1-carboxyvinyl)-3-phosphoshikimate + phosphate. It participates in metabolic intermediate biosynthesis; chorismate biosynthesis; chorismate from D-erythrose 4-phosphate and phosphoenolpyruvate: step 2/7. It functions in the pathway metabolic intermediate biosynthesis; chorismate biosynthesis; chorismate from D-erythrose 4-phosphate and phosphoenolpyruvate: step 3/7. Its pathway is metabolic intermediate biosynthesis; chorismate biosynthesis; chorismate from D-erythrose 4-phosphate and phosphoenolpyruvate: step 4/7. The protein operates within metabolic intermediate biosynthesis; chorismate biosynthesis; chorismate from D-erythrose 4-phosphate and phosphoenolpyruvate: step 5/7. It participates in metabolic intermediate biosynthesis; chorismate biosynthesis; chorismate from D-erythrose 4-phosphate and phosphoenolpyruvate: step 6/7. Its function is as follows. The AROM polypeptide catalyzes 5 consecutive enzymatic reactions in prechorismate polyaromatic amino acid biosynthesis. This is Pentafunctional AROM polypeptide from Mycosarcoma maydis (Corn smut fungus).